Consider the following 559-residue polypeptide: Potassium-transporting ATPase potassium-binding subunit (559 aa).

A run of 12 helical transmembrane segments spans residues 5 to 25, 63 to 83, 132 to 152, 170 to 190, 250 to 270, 283 to 303, 329 to 349, 356 to 376, 379 to 399, 416 to 436, 484 to 504, and 524 to 544; these read GFLL…PLGV, LLAI…MLLG, GLTV…FALI, LVRI…LLFI, LTNM…CFAF, LLWA…SAEV, VLVS…AVIA, ALGG…FGGV, GLYG…LMIG, MTAL…ALAM, LLAF…MAIA, and GALF…LTFI.

It belongs to the KdpA family. As to quaternary structure, the system is composed of three essential subunits: KdpA, KdpB and KdpC.

The protein resides in the cell inner membrane. In terms of biological role, part of the high-affinity ATP-driven potassium transport (or Kdp) system, which catalyzes the hydrolysis of ATP coupled with the electrogenic transport of potassium into the cytoplasm. This subunit binds the periplasmic potassium ions and delivers the ions to the membrane domain of KdpB through an intramembrane tunnel. This is Potassium-transporting ATPase potassium-binding subunit from Citrobacter koseri (strain ATCC BAA-895 / CDC 4225-83 / SGSC4696).